The sequence spans 250 residues: Probable replication-associated protein repA2 (250 aa).

This sequence belongs to the IncFII RepA family.

In terms of biological role, this protein is essential for plasmid replication; it is involved in copy control functions. The polypeptide is Probable replication-associated protein repA2 (repA2) (Buchnera aphidicola subsp. Acyrthosiphon pisum (strain APS) (Acyrthosiphon pisum symbiotic bacterium)).